A 284-amino-acid chain; its full sequence is METPRLLFVHAHPDDETLTTGATIAHYTARGAEVQVITCTLGEEGEVIGDRWAQLAVDHADQLGGYRIGELTAALAALGVDRPRYLGGAGRWRDSGMEGTPARRRERFVDGDVAEQTAVLAAAIDELRPHVVVTYDPNGGYGHPDHIHTHRLTTAAVEAAAWQVPKFYWTVTSDSALRTGIAALTDVPDGWVTLTADDLPLVGFTDDTIDAALDLGAHSAARVAAMHAHQTQITVAPDGRSFALSNDIALPVDATEYYVLARGEAGERDARGWETDLLAGLNLR.

Zn(2+)-binding residues include H12, D15, and H146.

Belongs to the MshB deacetylase family. Requires Zn(2+) as cofactor.

The enzyme catalyses 1D-myo-inositol 2-acetamido-2-deoxy-alpha-D-glucopyranoside + H2O = 1D-myo-inositol 2-amino-2-deoxy-alpha-D-glucopyranoside + acetate. Functionally, catalyzes the deacetylation of 1D-myo-inositol 2-acetamido-2-deoxy-alpha-D-glucopyranoside (GlcNAc-Ins) in the mycothiol biosynthesis pathway. The sequence is that of 1D-myo-inositol 2-acetamido-2-deoxy-alpha-D-glucopyranoside deacetylase from Mycolicibacterium gilvum (strain PYR-GCK) (Mycobacterium gilvum (strain PYR-GCK)).